The following is a 1939-amino-acid chain: Myosin-1 (1939 aa).

A Myosin N-terminal SH3-like domain is found at 33–82 (DAKTSVFVAEPKESFVKGTVQSREGGKVTVKTEAGATLTVKEDQVFPMNP). Phosphothreonine occurs at positions 64 and 69. Positions 86-782 (DKIEDMAMMT…LLGLLEEMRD (697 aa)) constitute a Myosin motor domain. Lysine 130 carries the N6,N6,N6-trimethyllysine modification. 179-186 (GESGAGKT) contributes to the ATP binding site. Phosphotyrosine is present on tyrosine 389. The residue at position 419 (threonine 419) is a Phosphothreonine. Tyrosine 424 carries the phosphotyrosine modification. Residues 659 to 681 (LNKLMTNLRSTHPHFVRCIIPNE) are actin-binding. Histidine 757 carries the post-translational modification Pros-methylhistidine. Residues 761–775 (KFGHTKVFFKAGLLG) form an actin-binding region. In terms of domain architecture, IQ spans 785 to 814 (LAQLITRTQARCRGFLARVEYQKMVERRES). Positions 843–1939 (LLKSAETEKE…EVHTKIISEE (1097 aa)) form a coiled coil. Phosphoserine is present on residues serine 1092 and serine 1096. Disordered stretches follow at residues 1125–1147 (EIEA…SREL) and 1153–1172 (RLEE…KKRE). Residues 1128–1147 (AERASRAKAEKQRSDLSREL) show a composition bias toward basic and acidic residues. Residues serine 1162 and serine 1237 each carry the phosphoserine modification. Threonine 1241 bears the Phosphothreonine mark. Residue serine 1243 is modified to Phosphoserine. Phosphothreonine is present on threonine 1255. Serine 1261 is modified (phosphoserine). Phosphothreonine occurs at positions 1265 and 1286. Phosphoserine occurs at positions 1288, 1292, 1303, and 1306. A Phosphotyrosine modification is found at tyrosine 1464. Threonine 1467 carries the phosphothreonine modification. Serine 1474 bears the Phosphoserine mark. A Phosphotyrosine modification is found at tyrosine 1492. Serine 1495 is subject to Phosphoserine. Threonine 1501 bears the Phosphothreonine mark. Serine 1514 carries the phosphoserine modification. Position 1517 is a phosphothreonine (threonine 1517). Serine 1542, serine 1554, serine 1574, serine 1600, serine 1603, serine 1714, and serine 1726 each carry phosphoserine. Threonine 1730 and threonine 1736 each carry phosphothreonine. Serine 1739 is subject to Phosphoserine.

It belongs to the TRAFAC class myosin-kinesin ATPase superfamily. Myosin family. Muscle myosin is a hexameric protein that consists of 2 heavy chain subunits (MHC), 2 alkali light chain subunits (MLC) and 2 regulatory light chain subunits (MLC-2). Interacts with SLC26A5.

It localises to the cytoplasm. The protein localises to the myofibril. Required for normal hearing. It plays a role in cochlear amplification of auditory stimuli, likely through the positive regulation of prestin (SLC26A5) activity and outer hair cell (OHC) electromotility. The sequence is that of Myosin-1 (MYH1) from Sus scrofa (Pig).